The following is a 162-amino-acid chain: MSTKINSKKLEMFDLLKKFIDSKQNIFFLDYRGLSVSQLTDLRNKIEGEHGALKVVKNNIMKMVLKEKNIDVVDSCLVGPTVVVTALEEANVIAKIFYDFVKTTTLKVKGGFVLGEFYDEAKVQAYSKLPTKKESISLFASVLKAPVSKLVRTLKALADVKN.

The protein belongs to the universal ribosomal protein uL10 family. In terms of assembly, part of the ribosomal stalk of the 50S ribosomal subunit. The N-terminus interacts with L11 and the large rRNA to form the base of the stalk. The C-terminus forms an elongated spine to which L12 dimers bind in a sequential fashion forming a multimeric L10(L12)X complex.

Forms part of the ribosomal stalk, playing a central role in the interaction of the ribosome with GTP-bound translation factors. The sequence is that of Large ribosomal subunit protein uL10 from Borreliella afzelii (strain PKo) (Borrelia afzelii).